The following is a 279-amino-acid chain: Energy-coupling factor transporter ATP-binding protein EcfA1 (279 aa).

In terms of domain architecture, ABC transporter spans 6–240; sequence VRLEHVFYKY…ADAMREIGLG (235 aa). 40–47 serves as a coordination point for ATP; that stretch reads GHNGSGKS.

Belongs to the ABC transporter superfamily. Energy-coupling factor EcfA family. In terms of assembly, forms a stable energy-coupling factor (ECF) transporter complex composed of 2 membrane-embedded substrate-binding proteins (S component), 2 ATP-binding proteins (A component) and 2 transmembrane proteins (T component).

It is found in the cell membrane. In terms of biological role, ATP-binding (A) component of a common energy-coupling factor (ECF) ABC-transporter complex. Unlike classic ABC transporters this ECF transporter provides the energy necessary to transport a number of different substrates. This Listeria monocytogenes serotype 4b (strain F2365) protein is Energy-coupling factor transporter ATP-binding protein EcfA1.